The primary structure comprises 213 residues: Small ribosomal subunit protein eS6 (213 aa).

Belongs to the eukaryotic ribosomal protein eS6 family.

In Sulfolobus acidocaldarius (strain ATCC 33909 / DSM 639 / JCM 8929 / NBRC 15157 / NCIMB 11770), this protein is Small ribosomal subunit protein eS6.